A 99-amino-acid chain; its full sequence is Defensin-A4 (99 aa).

The N-terminal stretch at Met1–Gly21 is a signal peptide. A propeptide spanning residues Ala22 to Val68 is cleaved from the precursor. 3 cysteine pairs are disulfide-bonded: Cys73–Cys97, Cys75–Cys89, and Cys79–Cys96.

The protein belongs to the alpha-defensin family. As to expression, lowly expressed in spleen, and expressed at lower levels in kidney and lung.

The protein resides in the secreted. Functionally, has antimicrobial activity. The protein is Defensin-A4 of Ornithorhynchus anatinus (Duckbill platypus).